The following is a 284-amino-acid chain: Cysteine-rich repeat secretory protein 8 (284 aa).

A signal peptide spans 1-27 (MATFIRFTAPLFCFFFLFSLFSHQTMS). 2 consecutive Gnk2-homologous domains span residues 32-136 (MATF…NVSF) and 151-259 (SLAT…TTGL).

The protein belongs to the cysteine-rich repeat secretory protein family.

It localises to the secreted. The sequence is that of Cysteine-rich repeat secretory protein 8 (CRRSP8) from Arabidopsis thaliana (Mouse-ear cress).